Here is a 694-residue protein sequence, read N- to C-terminus: U-box domain-containing protein 1 (694 aa).

In terms of domain architecture, U-box spans 292–366; sequence NIPDEFRCPI…HQWCYENNVK (75 aa). ARM repeat units follow at residues 392–432, 435–474, 476–516, 519–558, 560–599, 601–641, and 646–685; these read SENK…LLAK, MDNR…NLSI, DNNK…SLSM, DCKV…NLAV, NPNK…VLLG, SEGL…GLCK, and LVAM…LLNR.

Interacts with LYK3. Binds to NORK/DMI2. In terms of processing, phosphorylated by LYK3 in vitro. Phosphorylated by NORK/DMI2. In terms of tissue distribution, present ubiquitously at very low levels during nonsymbiotic growth. Accumulates in roots and nodules during symbiotic growth with rhizobia and mycorrhiza.

The protein localises to the cell membrane. The enzyme catalyses S-ubiquitinyl-[E2 ubiquitin-conjugating enzyme]-L-cysteine + [acceptor protein]-L-lysine = [E2 ubiquitin-conjugating enzyme]-L-cysteine + N(6)-ubiquitinyl-[acceptor protein]-L-lysine.. The protein operates within protein modification; protein ubiquitination. Exhibits U-box-dependent E3 ubiquitin ligase activity in vitro. Negatively modulates successive stages of infection and development of rhizobial (e.g. Sinorhizobium meliloti) and arbuscular mycorrhizal fungi (AM, e.g. Rhizophagus irregularis) symbioses, in an ubiquitin ligase activity-dependent manner. Negative regulator of the LYK3 signaling pathway leading to nitrogen-fixing symbiosis (e.g. infection and nodulation) by rhizobia. May be involved in the discrimination of rhizobium strains producing variant Nod factors. In Medicago truncatula (Barrel medic), this protein is U-box domain-containing protein 1.